The following is a 713-amino-acid chain: Cyclomaltodextrin glucanotransferase (713 aa).

The N-terminal stretch at 1–27 (MKRFMKLTAVWTLWLSLTLGLLSPVHA) is a signal peptide. The A1 stretch occupies residues 28–165 (APDTSVSNKQ…NIKVIIDFAP (138 aa)). Ca(2+) is bound by residues aspartate 54, asparagine 56, asparagine 59, and asparagine 60. Cysteine 70 and cysteine 77 are joined by a disulfide. Ca(2+)-binding residues include glycine 78 and aspartate 80. 127–128 (YW) is a binding site for substrate. Position 166 (asparagine 166) interacts with Ca(2+). The interval 166–229 (NHTSPASSDD…NLYDLADLNH (64 aa)) is b. Histidine 167 contributes to the substrate binding site. Isoleucine 217 is a binding site for Ca(2+). 220–223 (NLYD) contributes to the substrate binding site. Residue aspartate 226 participates in Ca(2+) binding. The A2 stretch occupies residues 230–433 (NNSSVDVYLK…LRKSNPAIAY (204 aa)). Substrate is bound at residue arginine 254. Catalysis depends on aspartate 256, which acts as the Nucleophile. 259–260 (KH) is a binding site for substrate. A Ca(2+)-binding site is contributed by histidine 260. Glutamate 284 functions as the Proton donor in the catalytic mechanism. Substrate-binding residues include histidine 354, aspartate 398, and arginine 402. The tract at residues 434–522 (GSTHERWINN…GTAVWQYTTD (89 aa)) is c. A d region spans residues 523 to 609 (ATTPIIGNVG…SNIYDNFEVL (87 aa)). The region spanning 526–607 (PIIGNVGPMM…AASNIYDNFE (82 aa)) is the IPT/TIG domain. The CBM20 domain maps to 608 to 713 (VLTGDQVTVR…TATVNVNWQP (106 aa)). The e stretch occupies residues 610–713 (TGDQVTVRFV…TATVNVNWQP (104 aa)).

Belongs to the glycosyl hydrolase 13 family. Monomer. The cofactor is Ca(2+).

It localises to the secreted. It carries out the reaction Cyclizes part of a (1-&gt;4)-alpha-D-glucan chain by formation of a (1-&gt;4)-alpha-D-glucosidic bond.. This is Cyclomaltodextrin glucanotransferase (cgt) from Bacillus sp. (strain 1011).